Consider the following 345-residue polypeptide: Phosphoribosylformylglycinamidine cyclo-ligase (345 aa).

It belongs to the AIR synthase family.

It is found in the cytoplasm. It carries out the reaction 2-formamido-N(1)-(5-O-phospho-beta-D-ribosyl)acetamidine + ATP = 5-amino-1-(5-phospho-beta-D-ribosyl)imidazole + ADP + phosphate + H(+). The protein operates within purine metabolism; IMP biosynthesis via de novo pathway; 5-amino-1-(5-phospho-D-ribosyl)imidazole from N(2)-formyl-N(1)-(5-phospho-D-ribosyl)glycinamide: step 2/2. The polypeptide is Phosphoribosylformylglycinamidine cyclo-ligase (Anaeromyxobacter sp. (strain K)).